The chain runs to 401 residues: Phosrestin-1 (401 aa).

The protein belongs to the arrestin family. In terms of tissue distribution, inner and outer segments, and the inner plexiform regions of the retina.

Functionally, undergoes light-induced phosphorylation, probably plays an important role in the photoreceptor transduction. The chain is Phosrestin-1 (Arr2) from Drosophila miranda (Fruit fly).